The following is an 83-amino-acid chain: Short neurotoxin VAN-10 (83 aa).

The first 21 residues, 1–21 (MKTLLLTLVVVTIVCLDLGYT), serve as a signal peptide directing secretion. Intrachain disulfides connect Cys-24/Cys-45, Cys-38/Cys-62, Cys-64/Cys-75, and Cys-76/Cys-81.

This sequence belongs to the three-finger toxin family. Short-chain subfamily. Type I alpha-neurotoxin sub-subfamily. In terms of tissue distribution, expressed by the venom gland.

The protein localises to the secreted. Binds to muscle nicotinic acetylcholine receptor (nAChR) and inhibit acetylcholine from binding to the receptor, thereby impairing neuromuscular transmission. This is Short neurotoxin VAN-10 from Laticauda laticaudata (Blue-ringed sea krait).